Consider the following 336-residue polypeptide: Protein-arginine kinase (336 aa).

In terms of domain architecture, Phosphagen kinase C-terminal spans 22 to 245 (IVMSSRIRLA…QQIINEEMQI (224 aa)). Residues 25–29 (SSRIR), His-83, Arg-116, 167–171 (RASVM), and 198–203 (RGIYGE) each bind ATP.

Belongs to the ATP:guanido phosphotransferase family.

It carries out the reaction L-arginyl-[protein] + ATP = N(omega)-phospho-L-arginyl-[protein] + ADP + H(+). In terms of biological role, catalyzes the specific phosphorylation of arginine residues in proteins. The chain is Protein-arginine kinase from Staphylococcus saprophyticus subsp. saprophyticus (strain ATCC 15305 / DSM 20229 / NCIMB 8711 / NCTC 7292 / S-41).